A 555-amino-acid polypeptide reads, in one-letter code: Formate--tetrahydrofolate ligase (555 aa).

ATP is bound at residue 64-71 (TPAGEGKT).

The protein belongs to the formate--tetrahydrofolate ligase family.

It catalyses the reaction (6S)-5,6,7,8-tetrahydrofolate + formate + ATP = (6R)-10-formyltetrahydrofolate + ADP + phosphate. Its pathway is one-carbon metabolism; tetrahydrofolate interconversion. The protein is Formate--tetrahydrofolate ligase of Allorhizobium ampelinum (strain ATCC BAA-846 / DSM 112012 / S4) (Agrobacterium vitis (strain S4)).